The chain runs to 445 residues: Argininosuccinate synthase (445 aa).

Residues 17-25 and Ala-43 contribute to the ATP site; that span reads AFSGGLDTS. L-citrulline is bound at residue Tyr-99. ATP contacts are provided by Gly-129 and Thr-131. Residues Thr-131, Asn-135, and Asp-136 each coordinate L-aspartate. Residue Asn-135 participates in L-citrulline binding. Position 136 (Asp-136) interacts with ATP. Positions 139 and 192 each coordinate L-citrulline. Asp-194 is a binding site for ATP. The L-citrulline site is built by Thr-201, Glu-203, and Glu-280.

This sequence belongs to the argininosuccinate synthase family. Type 2 subfamily. In terms of assembly, homotetramer.

It is found in the cytoplasm. The enzyme catalyses L-citrulline + L-aspartate + ATP = 2-(N(omega)-L-arginino)succinate + AMP + diphosphate + H(+). The protein operates within amino-acid biosynthesis; L-arginine biosynthesis; L-arginine from L-ornithine and carbamoyl phosphate: step 2/3. This chain is Argininosuccinate synthase, found in Rhodopseudomonas palustris (strain BisA53).